A 165-amino-acid polypeptide reads, in one-letter code: Nucleotide-binding protein CHY_1197 (165 aa).

Belongs to the YajQ family.

Its function is as follows. Nucleotide-binding protein. This is Nucleotide-binding protein CHY_1197 from Carboxydothermus hydrogenoformans (strain ATCC BAA-161 / DSM 6008 / Z-2901).